The chain runs to 507 residues: Histidine--tRNA ligase (507 aa).

Belongs to the class-II aminoacyl-tRNA synthetase family. In terms of assembly, homodimer.

The protein resides in the cytoplasm. It carries out the reaction tRNA(His) + L-histidine + ATP = L-histidyl-tRNA(His) + AMP + diphosphate + H(+). The sequence is that of Histidine--tRNA ligase from Rhizobium leguminosarum bv. trifolii (strain WSM2304).